A 622-amino-acid polypeptide reads, in one-letter code: Chaperone protein HscA homolog (622 aa).

The protein belongs to the heat shock protein 70 family.

Functionally, chaperone involved in the maturation of iron-sulfur cluster-containing proteins. Has a low intrinsic ATPase activity which is markedly stimulated by HscB. This chain is Chaperone protein HscA homolog, found in Burkholderia pseudomallei (strain 668).